We begin with the raw amino-acid sequence, 422 residues long: Proline-rich protein 22 (422 aa).

Disordered regions lie at residues 1 to 35 (MQHP…PAPT), 306 to 325 (LCEV…SADD), and 363 to 422 (EEQP…ATPH). The segment covering 383–400 (GKRKASTAKKGKPGRKAR) has biased composition (basic residues). Basic and acidic residues predominate over residues 413–422 (PREDLGATPH).

The polypeptide is Proline-rich protein 22 (PRR22) (Homo sapiens (Human)).